The following is a 401-amino-acid chain: tRNA(Met) cytidine acetate ligase (401 aa).

ATP contacts are provided by residues 7–20 (IVEY…HLYH), Gly-102, Asn-164, and Arg-189.

This sequence belongs to the TmcAL family.

It is found in the cytoplasm. It catalyses the reaction cytidine(34) in elongator tRNA(Met) + acetate + ATP = N(4)-acetylcytidine(34) in elongator tRNA(Met) + AMP + diphosphate. Its function is as follows. Catalyzes the formation of N(4)-acetylcytidine (ac(4)C) at the wobble position of elongator tRNA(Met), using acetate and ATP as substrates. First activates an acetate ion to form acetyladenylate (Ac-AMP) and then transfers the acetyl group to tRNA to form ac(4)C34. The protein is tRNA(Met) cytidine acetate ligase of Caldanaerobacter subterraneus subsp. tengcongensis (strain DSM 15242 / JCM 11007 / NBRC 100824 / MB4) (Thermoanaerobacter tengcongensis).